The primary structure comprises 249 residues: 2,3-bisphosphoglycerate-dependent phosphoglycerate mutase (249 aa).

Substrate is bound by residues 9–16 (RHGQSQWN), 22–23 (TG), arginine 61, 88–91 (ERHY), lysine 99, 115–116 (RR), and 184–185 (GN). Histidine 10 (tele-phosphohistidine intermediate) is an active-site residue. The Proton donor/acceptor role is filled by glutamate 88.

It belongs to the phosphoglycerate mutase family. BPG-dependent PGAM subfamily. As to quaternary structure, homodimer.

It catalyses the reaction (2R)-2-phosphoglycerate = (2R)-3-phosphoglycerate. Its pathway is carbohydrate degradation; glycolysis; pyruvate from D-glyceraldehyde 3-phosphate: step 3/5. Functionally, catalyzes the interconversion of 2-phosphoglycerate and 3-phosphoglycerate. In Xanthomonas oryzae pv. oryzae (strain MAFF 311018), this protein is 2,3-bisphosphoglycerate-dependent phosphoglycerate mutase.